Here is a 358-residue protein sequence, read N- to C-terminus: Isopentenyl-diphosphate delta-isomerase (358 aa).

A substrate-binding site is contributed by 12–13 (RK). FMN-binding positions include 69-71 (AMT), Ser99, and Asn128. Gln158 contributes to the substrate binding site. Glu159 contributes to the Mg(2+) binding site. FMN-binding positions include Lys190, Thr220, 267 to 269 (GIR), and 288 to 289 (AG).

It belongs to the IPP isomerase type 2 family. Homooctamer. Dimer of tetramers. FMN serves as cofactor. NADPH is required as a cofactor. Requires Mg(2+) as cofactor.

Its subcellular location is the cytoplasm. The catalysed reaction is isopentenyl diphosphate = dimethylallyl diphosphate. Involved in the biosynthesis of isoprenoids. Catalyzes the 1,3-allylic rearrangement of the homoallylic substrate isopentenyl (IPP) to its allylic isomer, dimethylallyl diphosphate (DMAPP). The polypeptide is Isopentenyl-diphosphate delta-isomerase (Listeria welshimeri serovar 6b (strain ATCC 35897 / DSM 20650 / CCUG 15529 / CIP 8149 / NCTC 11857 / SLCC 5334 / V8)).